The chain runs to 563 residues: (R)-mandelonitrile lyase 2 (563 aa).

The signal sequence occupies residues 1 to 27; the sequence is MEKSTMSAILLVLYIFVLHLQYSEVHS. Residues 63-64, 82-83, Val-129, Thr-133, and 137-140 contribute to the FAD site; these read TS, ER, and NAGV. N-linked (GlcNAc...) asparagine glycosylation is found at Asn-145 and Asn-162. Val-244 contributes to the FAD binding site. Cys-355 serves as a coordination point for substrate. N-linked (GlcNAc...) asparagine glycans are attached at residues Asn-379 and Asn-419. Cys-426 and Cys-477 are joined by a disulfide. Tyr-484 is a substrate binding site. FAD contacts are provided by residues 485–486 and Gly-514; that span reads WH. The active-site Proton donor is the His-486. The active-site Proton acceptor is His-524. 525–526 provides a ligand contact to FAD; sequence PQ.

It belongs to the GMC oxidoreductase family. As to quaternary structure, monomer. FAD serves as cofactor. Post-translationally, glycosylated. Deglycosylation does not affect the enzymatic activity.

It catalyses the reaction (R)-mandelonitrile = benzaldehyde + hydrogen cyanide. Involved in cyanogenesis, the release of HCN from injured tissues. Catalyzes the stereospecific addition of HCN to a variety of aldehydes in vitro. Has no oxidase activity. The redox properties of the FAD cofactor appear to be unimportant for catalysis. This is (R)-mandelonitrile lyase 2 (MDL2) from Prunus dulcis (Almond).